The following is a 161-amino-acid chain: SsrA-binding protein (161 aa).

Belongs to the SmpB family.

It localises to the cytoplasm. In terms of biological role, required for rescue of stalled ribosomes mediated by trans-translation. Binds to transfer-messenger RNA (tmRNA), required for stable association of tmRNA with ribosomes. tmRNA and SmpB together mimic tRNA shape, replacing the anticodon stem-loop with SmpB. tmRNA is encoded by the ssrA gene; the 2 termini fold to resemble tRNA(Ala) and it encodes a 'tag peptide', a short internal open reading frame. During trans-translation Ala-aminoacylated tmRNA acts like a tRNA, entering the A-site of stalled ribosomes, displacing the stalled mRNA. The ribosome then switches to translate the ORF on the tmRNA; the nascent peptide is terminated with the 'tag peptide' encoded by the tmRNA and targeted for degradation. The ribosome is freed to recommence translation, which seems to be the essential function of trans-translation. In Baumannia cicadellinicola subsp. Homalodisca coagulata, this protein is SsrA-binding protein.